A 245-amino-acid chain; its full sequence is Endonuclease III (245 aa).

A HhH domain is found at 119–138 (MVDLFTLPGVGRKTANVILG). [4Fe-4S] cluster is bound by residues cysteine 198, cysteine 205, cysteine 208, and cysteine 214.

It belongs to the Nth/MutY family. It depends on [4Fe-4S] cluster as a cofactor.

The enzyme catalyses 2'-deoxyribonucleotide-(2'-deoxyribose 5'-phosphate)-2'-deoxyribonucleotide-DNA = a 3'-end 2'-deoxyribonucleotide-(2,3-dehydro-2,3-deoxyribose 5'-phosphate)-DNA + a 5'-end 5'-phospho-2'-deoxyribonucleoside-DNA + H(+). DNA repair enzyme that has both DNA N-glycosylase activity and AP-lyase activity. The DNA N-glycosylase activity releases various damaged pyrimidines from DNA by cleaving the N-glycosidic bond, leaving an AP (apurinic/apyrimidinic) site. The AP-lyase activity cleaves the phosphodiester bond 3' to the AP site by a beta-elimination, leaving a 3'-terminal unsaturated sugar and a product with a terminal 5'-phosphate. The chain is Endonuclease III from Mycobacterium leprae (strain TN).